The chain runs to 360 residues: Uroporphyrinogen decarboxylase (360 aa).

Residues 27–31 (RQSGR), Phe-46, Asp-77, Tyr-154, Thr-209, and His-327 each bind substrate.

Belongs to the uroporphyrinogen decarboxylase family. As to quaternary structure, homodimer.

It localises to the cytoplasm. It carries out the reaction uroporphyrinogen III + 4 H(+) = coproporphyrinogen III + 4 CO2. Its pathway is porphyrin-containing compound metabolism; protoporphyrin-IX biosynthesis; coproporphyrinogen-III from 5-aminolevulinate: step 4/4. Catalyzes the decarboxylation of four acetate groups of uroporphyrinogen-III to yield coproporphyrinogen-III. The polypeptide is Uroporphyrinogen decarboxylase (Wigglesworthia glossinidia brevipalpis).